The primary structure comprises 149 residues: Immunoglobulin kappa chain variable 6-17 (149 aa).

Positions 1 to 29 are cleaved as a signal peptide; the sequence is MHHTSMGIKMESQIQVFVFVFLWLSGVDG. 2 repeats span residues 26–35 and 38–47; these read GVDGDIVMTQ. The interval 42-64 is framework-1; that stretch reads DIVMTQSHKFMSTSVGDRVSITC. The segment at 65–75 is complementarity-determining-1; that stretch reads KASQDVSTTVA. The interval 76–90 is framework-2; it reads WYQQKPGQSPKLLIY. The segment at 91–97 is complementarity-determining-2; that stretch reads SASYRYT. Residues 98-129 are framework-3; sequence GVPDRFTGSGSGTDFTFTISSVQAEDLAVYYC. The interval 130–138 is complementarity-determining-3; the sequence is QQHYSTPPT. Residues 139–148 are framework-4; it reads FGGGTKLEIK.

The sequence is that of Immunoglobulin kappa chain variable 6-17 from Mus musculus (Mouse).